Consider the following 158-residue polypeptide: NAD(P)H-quinone oxidoreductase subunit J, chloroplastic (158 aa).

This sequence belongs to the complex I 30 kDa subunit family. In terms of assembly, NDH is composed of at least 16 different subunits, 5 of which are encoded in the nucleus.

The protein resides in the plastid. Its subcellular location is the chloroplast thylakoid membrane. The enzyme catalyses a plastoquinone + NADH + (n+1) H(+)(in) = a plastoquinol + NAD(+) + n H(+)(out). It carries out the reaction a plastoquinone + NADPH + (n+1) H(+)(in) = a plastoquinol + NADP(+) + n H(+)(out). Functionally, NDH shuttles electrons from NAD(P)H:plastoquinone, via FMN and iron-sulfur (Fe-S) centers, to quinones in the photosynthetic chain and possibly in a chloroplast respiratory chain. The immediate electron acceptor for the enzyme in this species is believed to be plastoquinone. Couples the redox reaction to proton translocation, and thus conserves the redox energy in a proton gradient. The chain is NAD(P)H-quinone oxidoreductase subunit J, chloroplastic from Eucalyptus globulus subsp. globulus (Tasmanian blue gum).